The following is a 117-amino-acid chain: Immunoglobulin kappa variable 1D-12 (117 aa).

Positions 1 to 22 (MDMMVPAQLLGLLLLWFPGSRC) are cleaved as a signal peptide. Positions 23 to 45 (DIQMTQSPSSVSASVGDRVTITC) are framework-1. Positions 24–117 (IQMTQSPSSV…YYCQQANSFP (94 aa)) constitute an Ig-like domain. A disulfide bridge connects residues C45 and C110. A complementarity-determining-1 region spans residues 46-56 (RASQGISSWLA). Residues 57 to 71 (WYQQKPGKAPKLLIY) are framework-2. The complementarity-determining-2 stretch occupies residues 72–78 (AASSLQS). Residues 79 to 110 (GVPSRFSGSGSGTDFTLTISSLQPEDFATYYC) form a framework-3 region. Positions 111–117 (QQANSFP) are complementarity-determining-3.

As to quaternary structure, immunoglobulins are composed of two identical heavy chains and two identical light chains; disulfide-linked.

The protein localises to the secreted. Its subcellular location is the cell membrane. In terms of biological role, v region of the variable domain of immunoglobulin light chains that participates in the antigen recognition. Immunoglobulins, also known as antibodies, are membrane-bound or secreted glycoproteins produced by B lymphocytes. In the recognition phase of humoral immunity, the membrane-bound immunoglobulins serve as receptors which, upon binding of a specific antigen, trigger the clonal expansion and differentiation of B lymphocytes into immunoglobulins-secreting plasma cells. Secreted immunoglobulins mediate the effector phase of humoral immunity, which results in the elimination of bound antigens. The antigen binding site is formed by the variable domain of one heavy chain, together with that of its associated light chain. Thus, each immunoglobulin has two antigen binding sites with remarkable affinity for a particular antigen. The variable domains are assembled by a process called V-(D)-J rearrangement and can then be subjected to somatic hypermutations which, after exposure to antigen and selection, allow affinity maturation for a particular antigen. The sequence is that of Immunoglobulin kappa variable 1D-12 from Homo sapiens (Human).